The sequence spans 100 residues: Aspartyl/glutamyl-tRNA(Asn/Gln) amidotransferase subunit C (100 aa).

Belongs to the GatC family. In terms of assembly, heterotrimer of A, B and C subunits.

It carries out the reaction L-glutamyl-tRNA(Gln) + L-glutamine + ATP + H2O = L-glutaminyl-tRNA(Gln) + L-glutamate + ADP + phosphate + H(+). It catalyses the reaction L-aspartyl-tRNA(Asn) + L-glutamine + ATP + H2O = L-asparaginyl-tRNA(Asn) + L-glutamate + ADP + phosphate + 2 H(+). In terms of biological role, allows the formation of correctly charged Asn-tRNA(Asn) or Gln-tRNA(Gln) through the transamidation of misacylated Asp-tRNA(Asn) or Glu-tRNA(Gln) in organisms which lack either or both of asparaginyl-tRNA or glutaminyl-tRNA synthetases. The reaction takes place in the presence of glutamine and ATP through an activated phospho-Asp-tRNA(Asn) or phospho-Glu-tRNA(Gln). The protein is Aspartyl/glutamyl-tRNA(Asn/Gln) amidotransferase subunit C of Rickettsia bellii (strain RML369-C).